The following is a 1057-amino-acid chain: MPKREDINKILVLGSGPIIIGQAAEFDYSGTQACLSLKELGYQTVLINSNPATIMTDTDIADKVYIEPLTLQFVSQILRKELPDAILPTLGGQQGLNMAMELSEAGILDELGIELLGTKLDAIDQAEDRERFRALMNDLNEPVPDSGIATTVEEAVSFADQSGYPVIVRPAFTMGGTGGGIAQDEAELRKITANGLTLSPVTQVLIEQSIAGLKEIEFEVMRDSVDNAIVVCNMENFDPVGIHTGDSIVYAPVQTLTDREVQMLRDASLSIIRALKIEGGCNVQLALDPAQDRYYVIEVNPRVSRSSALASKATGYPIAKVAAKIAVGLTLDEILNPVTGTTLAEFEPALDYVVCKIPRWPFDKFVRADRRLGTQMKATGEVMAVGRNVEEATQKAIRSLDIDINYIGDEELADLNEADLVDGIIHARDDRIFYLYEAIKRGYSVDKLADLTKINVYYLDKLLHIYEIEQELIATPFNADVLELAKKNGFSDEVIGKMWKTNEKEVRAYREQMGLSPVYKMIDTCAGEFESQTPYYYSTYELENESIVSNRKSIVVLGSGPIRIGQGVEFDYATVHSIQAIRQMGYEAIVVNNNPETVSTDFSMSDKLYFEPLTVEDVMNVIDLEKPEGVIVQFGGQTAINLAEPLAERGIKIFGTTVENVNRAEDRDEFNKLIQANGIRQPQGRTATTTSGAIEAAESIGYPVLVRPSYVLGGRAMEIVHAKEELENYMKNAVKVSHNHPVLVDQYLVGKECEVDVISDGENVVIPGIMEHIERSGVHSGDSMTVYPAQTLSQKVQDEIVKVSIKLAQSLECIGLMNIQFVVHNDEAYVIEVNPRASRTVPIMSKVTDLPMARLATRAILGESLVNQGLKPGLHPAGEIIHVKAPVFSFTKLDNVDSLLGPEMKSTGEVMGSDRTMAKALYKAFEGAKMHMPDHGKVLITVKDEDKGEAIDFARRFWELGYQLVATKGTAQTLAAHGLKVETVGKMTEENNIVDRIHDHRIQMVINTISDSTTSAADGIKIRSTALTYGVPLFTALDTVDAILQVLESQAFTTLHL.

The interval Met-1–Asp-401 is carboxyphosphate synthetic domain. Residues Arg-129, Arg-169, Gly-175, Gly-176, Gln-208, Ile-210, Glu-215, Gly-241, Ile-242, His-243, Gln-284, and Glu-298 each coordinate ATP. An ATP-grasp 1 domain is found at Arg-133 to Val-327. Mg(2+) is bound by residues Gln-284, Glu-298, and Asn-300. 3 residues coordinate Mn(2+): Gln-284, Glu-298, and Asn-300. The interval Ile-402–Ser-546 is oligomerization domain. The carbamoyl phosphate synthetic domain stretch occupies residues Ile-547–Lys-929. Residues Asn-671 to Leu-861 enclose the ATP-grasp 2 domain. Positions 707, 746, 748, 752, 777, 778, 779, 780, 820, and 832 each coordinate ATP. Residues Gln-820, Glu-832, and Asn-834 each contribute to the Mg(2+) site. Mn(2+) is bound by residues Gln-820, Glu-832, and Asn-834. Positions Met-930–Leu-1057 constitute an MGS-like domain. An allosteric domain region spans residues Met-930–Leu-1057.

This sequence belongs to the CarB family. Composed of two chains; the small (or glutamine) chain promotes the hydrolysis of glutamine to ammonia, which is used by the large (or ammonia) chain to synthesize carbamoyl phosphate. Tetramer of heterodimers (alpha,beta)4. Mg(2+) serves as cofactor. Requires Mn(2+) as cofactor.

The catalysed reaction is hydrogencarbonate + L-glutamine + 2 ATP + H2O = carbamoyl phosphate + L-glutamate + 2 ADP + phosphate + 2 H(+). It catalyses the reaction hydrogencarbonate + NH4(+) + 2 ATP = carbamoyl phosphate + 2 ADP + phosphate + 2 H(+). The protein operates within amino-acid biosynthesis; L-arginine biosynthesis; carbamoyl phosphate from bicarbonate: step 1/1. It participates in pyrimidine metabolism; UMP biosynthesis via de novo pathway; (S)-dihydroorotate from bicarbonate: step 1/3. Functionally, large subunit of the glutamine-dependent carbamoyl phosphate synthetase (CPSase). CPSase catalyzes the formation of carbamoyl phosphate from the ammonia moiety of glutamine, carbonate, and phosphate donated by ATP, constituting the first step of 2 biosynthetic pathways, one leading to arginine and/or urea and the other to pyrimidine nucleotides. The large subunit (synthetase) binds the substrates ammonia (free or transferred from glutamine from the small subunit), hydrogencarbonate and ATP and carries out an ATP-coupled ligase reaction, activating hydrogencarbonate by forming carboxy phosphate which reacts with ammonia to form carbamoyl phosphate. The sequence is that of Carbamoyl phosphate synthase large chain from Pediococcus pentosaceus (strain ATCC 25745 / CCUG 21536 / LMG 10740 / 183-1w).